The primary structure comprises 158 residues: Large ribosomal subunit protein uL16 (158 aa).

It belongs to the universal ribosomal protein uL16 family. In terms of assembly, part of the 50S ribosomal subunit.

Its function is as follows. Binds 23S rRNA and is also seen to make contacts with the A and possibly P site tRNAs. The polypeptide is Large ribosomal subunit protein uL16 (Synechococcus sp. (strain CC9902)).